The primary structure comprises 171 residues: 3-hydroxydecanoyl-[acyl-carrier-protein] dehydratase (171 aa).

His-70 is an active-site residue.

This sequence belongs to the thioester dehydratase family. FabA subfamily. Homodimer.

The protein resides in the cytoplasm. It carries out the reaction a (3R)-hydroxyacyl-[ACP] = a (2E)-enoyl-[ACP] + H2O. The enzyme catalyses (3R)-hydroxydecanoyl-[ACP] = (2E)-decenoyl-[ACP] + H2O. It catalyses the reaction (2E)-decenoyl-[ACP] = (3Z)-decenoyl-[ACP]. It functions in the pathway lipid metabolism; fatty acid biosynthesis. Its function is as follows. Necessary for the introduction of cis unsaturation into fatty acids. Catalyzes the dehydration of (3R)-3-hydroxydecanoyl-ACP to E-(2)-decenoyl-ACP and then its isomerization to Z-(3)-decenoyl-ACP. Can catalyze the dehydratase reaction for beta-hydroxyacyl-ACPs with saturated chain lengths up to 16:0, being most active on intermediate chain length. The protein is 3-hydroxydecanoyl-[acyl-carrier-protein] dehydratase of Pseudomonas syringae pv. tomato (strain ATCC BAA-871 / DC3000).